An 845-amino-acid chain; its full sequence is Prickle-like protein 2 (845 aa).

One can recognise a PET domain in the interval phenylalanine 18–threonine 126. At serine 92 the chain carries Phosphoserine. LIM zinc-binding domains follow at residues alanine 128–proline 193, proline 193–glutamate 253, and glutamate 253–asparagine 317. 2 disordered regions span residues glutamate 314–lysine 346 and tyrosine 483–glutamate 546. The segment covering glycine 318–glutamine 327 has biased composition (polar residues). 3 positions are modified to phosphoserine: serine 319, serine 321, and serine 322. Residues threonine 535, threonine 537, and threonine 540 each carry the phosphothreonine modification. A phosphoserine mark is found at serine 544 and serine 547. A disordered region spans residues alanine 558–glycine 581. A phosphoserine mark is found at serine 608 and serine 643. Residues glutamine 642–leucine 700 are disordered. Basic residues predominate over residues phenylalanine 683–arginine 693. Serine 732 is modified (phosphoserine). The interval serine 823–serine 845 is disordered. Cysteine 842 bears the Cysteine methyl ester mark. The S-farnesyl cysteine moiety is linked to residue cysteine 842. Positions isoleucine 843–serine 845 are cleaved as a propeptide — removed in mature form.

This sequence belongs to the prickle / espinas / testin family. In terms of tissue distribution, expressed in the hippocampus and cerebral cortex.

Its subcellular location is the nucleus membrane. This chain is Prickle-like protein 2 (Prickle2), found in Mus musculus (Mouse).